The sequence spans 176 residues: Large ribosomal subunit protein uL6 (176 aa).

Belongs to the universal ribosomal protein uL6 family. As to quaternary structure, part of the 50S ribosomal subunit.

This protein binds to the 23S rRNA, and is important in its secondary structure. It is located near the subunit interface in the base of the L7/L12 stalk, and near the tRNA binding site of the peptidyltransferase center. In Lacticaseibacillus paracasei (strain ATCC 334 / BCRC 17002 / CCUG 31169 / CIP 107868 / KCTC 3260 / NRRL B-441) (Lactobacillus paracasei), this protein is Large ribosomal subunit protein uL6.